Consider the following 468-residue polypeptide: Sorting and assembly machinery component 50 homolog (468 aa).

The segment at 1-24 (MGTVHARSLDPLPMNGPDFGSHDD) is disordered. The region spanning 44–124 (VVVQRVHFEG…LDVTFEVTEL (81 aa)) is the POTRA domain.

This sequence belongs to the SAM50/omp85 family. Associates with the mitochondrial contact site and cristae organizing system (MICOS) complex (also known as MINOS or MitOS complex).

The protein localises to the mitochondrion outer membrane. Its function is as follows. May play a role in the maintenance of the structure of mitochondrial cristae. In Xenopus tropicalis (Western clawed frog), this protein is Sorting and assembly machinery component 50 homolog (samm50).